The sequence spans 129 residues: ATP synthase epsilon chain (129 aa).

This sequence belongs to the ATPase epsilon chain family. In terms of assembly, F-type ATPases have 2 components, CF(1) - the catalytic core - and CF(0) - the membrane proton channel. CF(1) has five subunits: alpha(3), beta(3), gamma(1), delta(1), epsilon(1). CF(0) has three main subunits: a, b and c.

The protein resides in the cell inner membrane. In terms of biological role, produces ATP from ADP in the presence of a proton gradient across the membrane. The sequence is that of ATP synthase epsilon chain from Campylobacter jejuni subsp. jejuni serotype O:6 (strain 81116 / NCTC 11828).